The chain runs to 256 residues: tRNA pseudouridine synthase A (256 aa).

Catalysis depends on Asp-52, which acts as the Nucleophile. Tyr-110 contributes to the substrate binding site.

It belongs to the tRNA pseudouridine synthase TruA family. In terms of assembly, homodimer.

The catalysed reaction is uridine(38/39/40) in tRNA = pseudouridine(38/39/40) in tRNA. Its function is as follows. Formation of pseudouridine at positions 38, 39 and 40 in the anticodon stem and loop of transfer RNAs. The polypeptide is tRNA pseudouridine synthase A (Stenotrophomonas maltophilia (strain K279a)).